We begin with the raw amino-acid sequence, 209 residues long: High-affinity nitrate transporter 3.2 (209 aa).

A signal peptide spans 1–22 (MAIHTLLFVSLLIFSLIESSSG). The helical transmembrane segment at 177-197 (LDIASTFFSVFSVVSLFVFFV) threads the bilayer.

Belongs to the NAR2 family. As to expression, bearly detected in roots and shoots.

The protein localises to the cell membrane. Its function is as follows. Acts as a dual component transporter with NTR2.1. Required for high-affinity nitrate transport. This Arabidopsis thaliana (Mouse-ear cress) protein is High-affinity nitrate transporter 3.2.